The following is a 238-amino-acid chain: Large ribosomal subunit protein uL1 (238 aa).

This sequence belongs to the universal ribosomal protein uL1 family. Part of the 50S ribosomal subunit.

In terms of biological role, binds directly to 23S rRNA. The L1 stalk is quite mobile in the ribosome, and is involved in E site tRNA release. Protein L1 is also a translational repressor protein, it controls the translation of the L11 operon by binding to its mRNA. This is Large ribosomal subunit protein uL1 from Picosynechococcus sp. (strain ATCC 27264 / PCC 7002 / PR-6) (Agmenellum quadruplicatum).